A 263-amino-acid chain; its full sequence is Acetyl-coenzyme A carboxylase carboxyl transferase subunit beta (263 aa).

Positions Met1–Ala263 constitute a CoA carboxyltransferase N-terminal domain. Zn(2+) contacts are provided by Cys3, Cys6, Cys22, and Cys25. A C4-type zinc finger spans residues Cys3–Cys25.

It belongs to the AccD/PCCB family. Acetyl-CoA carboxylase is a heterohexamer composed of biotin carboxyl carrier protein (AccB), biotin carboxylase (AccC) and two subunits each of ACCase subunit alpha (AccA) and ACCase subunit beta (AccD). Zn(2+) serves as cofactor.

The protein resides in the cytoplasm. The catalysed reaction is N(6)-carboxybiotinyl-L-lysyl-[protein] + acetyl-CoA = N(6)-biotinyl-L-lysyl-[protein] + malonyl-CoA. It functions in the pathway lipid metabolism; malonyl-CoA biosynthesis; malonyl-CoA from acetyl-CoA: step 1/1. Component of the acetyl coenzyme A carboxylase (ACC) complex. Biotin carboxylase (BC) catalyzes the carboxylation of biotin on its carrier protein (BCCP) and then the CO(2) group is transferred by the transcarboxylase to acetyl-CoA to form malonyl-CoA. This chain is Acetyl-coenzyme A carboxylase carboxyl transferase subunit beta, found in Treponema denticola (strain ATCC 35405 / DSM 14222 / CIP 103919 / JCM 8153 / KCTC 15104).